A 458-amino-acid chain; its full sequence is Sensor histidine kinase ZraS (458 aa).

The Cytoplasmic segment spans residues 1–14 (MRFMQRSKDSLAKW). A helical transmembrane segment spans residues 15-35 (LSAILPVVIVGLVGLFAVTVI). At 36-194 (RDYGRETAAA…SAEDREQRNT (159 aa)) the chain is on the periplasmic side. Residues 195 to 215 (LIILFALATVLLASVLSFFWY) traverse the membrane as a helical segment. At 216–458 (RRYLRSRQLL…VNITRKDPQG (243 aa)) the chain is on the cytoplasmic side. Residues 244–451 (GVAHEIRNPL…RFTLWLPVNI (208 aa)) form the Histidine kinase domain. A Phosphohistidine; by autocatalysis modification is found at H247.

In terms of processing, autophosphorylated.

The protein localises to the cell inner membrane. It catalyses the reaction ATP + protein L-histidine = ADP + protein N-phospho-L-histidine.. With respect to regulation, activity of the ZraS/ZraR two-component system is repressed by the zinc-bound form of ZraP, which probably interacts with the periplasmic region of ZraS. In terms of biological role, part of the Zra signaling pathway, an envelope stress response (ESR) system composed of the periplasmic accessory protein ZraP, the histidine kinase ZraS and the transcriptional regulator ZraR. The ZraPSR system contributes to antibiotic resistance and is important for membrane integrity in the presence of membrane-targeting biocides. ZraS is a member of the two-component regulatory system ZraS/ZraR. Functions as a membrane-associated sensor kinase that phosphorylates ZraR in response to high concentrations of Zn(2+) or Pb(2+) in the medium. This Escherichia coli O157:H7 protein is Sensor histidine kinase ZraS (zraS).